We begin with the raw amino-acid sequence, 96 residues long: Small ribosomal subunit protein uS19 (96 aa).

It belongs to the universal ribosomal protein uS19 family.

Protein S19 forms a complex with S13 that binds strongly to the 16S ribosomal RNA. This Solibacter usitatus (strain Ellin6076) protein is Small ribosomal subunit protein uS19.